A 251-amino-acid polypeptide reads, in one-letter code: MELDLGLSLSPHKSSKLGFNFDLNKHCAIEGAASCLGTEKLRFEATFGLGNVEENCYMPKQRLFALNGQPNEEDEDPLESESSIVYDDEEENSEVVGWPPVKTCMIKYGSYHHRHIRNHHHCPYHHRGRRITAMNNNISNPTTATVGSSSSSSISSRSSMYVKVKMDGVAIARKVDIKLFNSYESLTNSLITMFTEYEDCDREDTNYTFTFQGKEGDWLLRGDVTWKIFAESVHRISIIRDRPCAYTRCLF.

The short motif at 3–7 is the EAR-like (transcriptional repression) element; it reads LDLGL. In terms of domain architecture, PB1 spans 159–246; it reads SMYVKVKMDG…SIIRDRPCAY (88 aa).

The protein belongs to the Aux/IAA family. In terms of assembly, homodimers and heterodimers.

It localises to the nucleus. In terms of biological role, aux/IAA proteins are short-lived transcriptional factors that function as repressors of early auxin response genes at low auxin concentrations. Repression is thought to result from the interaction with auxin response factors (ARFs), proteins that bind to the auxin-responsive promoter element (AuxRE). Formation of heterodimers with ARF proteins may alter their ability to modulate early auxin response genes expression. The chain is Auxin-responsive protein IAA29 (IAA29) from Arabidopsis thaliana (Mouse-ear cress).